The sequence spans 1009 residues: Regulator of telomere elongation helicase 1 homolog (1009 aa).

Residues 7-322 form the Helicase ATP-binding domain; it reads AGIPVHFPFE…KEMLLELEKA (316 aa). Position 42–49 (42–49) interacts with ATP; that stretch reads SPTGTGKT. [4Fe-4S] cluster-binding residues include C146, C164, C173, and C209. Residues 252-255 carry the DEAH box motif; sequence DEAH.

This sequence belongs to the helicase family. RAD3/XPD subfamily.

Its subcellular location is the nucleus. The enzyme catalyses ATP + H2O = ADP + phosphate + H(+). In terms of biological role, a probable ATP-dependent DNA helicase implicated in DNA repair and the maintenance of genomic stability. Acts as an anti-recombinase to counteract toxic recombination and limit crossover during meiosis. Regulates meiotic recombination and crossover homeostasis by physically dissociating strand invasion events and thereby promotes noncrossover repair by meiotic synthesis dependent strand annealing (SDSA) as well as disassembly of D loop recombination intermediates. This chain is Regulator of telomere elongation helicase 1 homolog, found in Drosophila persimilis (Fruit fly).